A 173-amino-acid chain; its full sequence is Inorganic pyrophosphatase (173 aa).

Substrate-binding residues include lysine 29, arginine 43, and tyrosine 55. Mg(2+)-binding residues include aspartate 65, aspartate 70, and aspartate 102. Tyrosine 141 provides a ligand contact to substrate.

This sequence belongs to the PPase family. As to quaternary structure, homohexamer. Mg(2+) serves as cofactor.

The protein resides in the cytoplasm. It carries out the reaction diphosphate + H2O = 2 phosphate + H(+). Functionally, catalyzes the hydrolysis of inorganic pyrophosphate (PPi) forming two phosphate ions. This chain is Inorganic pyrophosphatase, found in Gluconobacter oxydans (strain 621H) (Gluconobacter suboxydans).